The primary structure comprises 233 residues: ATP-dependent dethiobiotin synthetase BioD (233 aa).

12–17 contacts ATP; the sequence is EVGKTY. Thr16 is a binding site for Mg(2+). Residue Lys37 is part of the active site. ATP contacts are provided by residues Asp54, 120 to 123, and 186 to 187; these read EGAG and ND. Asp54 and Glu120 together coordinate Mg(2+).

The protein belongs to the dethiobiotin synthetase family. As to quaternary structure, homodimer. Mg(2+) is required as a cofactor.

The protein resides in the cytoplasm. The catalysed reaction is (7R,8S)-7,8-diammoniononanoate + CO2 + ATP = (4R,5S)-dethiobiotin + ADP + phosphate + 3 H(+). It participates in cofactor biosynthesis; biotin biosynthesis; biotin from 7,8-diaminononanoate: step 1/2. Its function is as follows. Catalyzes a mechanistically unusual reaction, the ATP-dependent insertion of CO2 between the N7 and N8 nitrogen atoms of 7,8-diaminopelargonic acid (DAPA, also called 7,8-diammoniononanoate) to form a ureido ring. The protein is ATP-dependent dethiobiotin synthetase BioD of Alteromonas mediterranea (strain DSM 17117 / CIP 110805 / LMG 28347 / Deep ecotype).